The primary structure comprises 486 residues: Glutamate--tRNA ligase (486 aa).

The 'HIGH' region motif lies at 11–21 (PSPTGFLHIGG). Zn(2+) is bound by residues Cys108, Cys110, Cys136, and His138. The short motif at 253–257 (KLSKR) is the 'KMSKS' region element. Lys256 contributes to the ATP binding site.

This sequence belongs to the class-I aminoacyl-tRNA synthetase family. Glutamate--tRNA ligase type 1 subfamily. Monomer. It depends on Zn(2+) as a cofactor.

The protein resides in the cytoplasm. It carries out the reaction tRNA(Glu) + L-glutamate + ATP = L-glutamyl-tRNA(Glu) + AMP + diphosphate. Functionally, catalyzes the attachment of glutamate to tRNA(Glu) in a two-step reaction: glutamate is first activated by ATP to form Glu-AMP and then transferred to the acceptor end of tRNA(Glu). The chain is Glutamate--tRNA ligase from Lysinibacillus sphaericus (strain C3-41).